A 770-amino-acid chain; its full sequence is Arf-GAP with coiled-coil, ANK repeat and PH domain-containing protein 2 (770 aa).

One can recognise a BAR domain in the interval 6-226 (DFEECLKDSP…MKDLGAQLDR (221 aa)). Residues 266-361 (GIVMEGYLFK…WIKAVQTSIA (96 aa)) enclose the PH domain. The tract at residues 371–392 (SEKLDKKSSPSTGSLDSGSESK) is disordered. Positions 379-388 (SPSTGSLDSG) are enriched in low complexity. 2 positions are modified to phosphoserine: S384 and S387. An Arf-GAP domain is found at 399-520 (ESALQRVQCI…KFVDKYSTLL (122 aa)). The C4-type zinc finger occupies 414 to 437 (CCDCGLADPRWASINLGITLCIEC). S521 is modified (phosphoserine). Over residues 548-561 (TPVKSNDSGIQQCS) the composition is skewed to polar residues. The segment at 548–571 (TPVKSNDSGIQQCSDDGRESLPST) is disordered. S573 and S576 each carry phosphoserine. ANK repeat units lie at residues 632 to 661 (NQAT…NVNQ), 665 to 694 (QGRG…NQHA), and 698 to 727 (EGKD…NEEM). A Phosphotyrosine modification is found at Y734. At S767 the chain carries Phosphoserine.

Interacts with RAB35 (GTP-bound form); the interaction is direct and probably recruits ACAP2 to membranes. Interacts with MICALL1; the interaction is indirect through RAB35.

It is found in the endosome membrane. Its subcellular location is the cell membrane. With respect to regulation, GAP activity stimulated by phosphatidylinositol 4,5-bisphosphate (PIP2) and phosphatidic acid. Functionally, GTPase-activating protein (GAP) for ADP ribosylation factor 6 (ARF6). Doesn't show GAP activity for RAB35. This chain is Arf-GAP with coiled-coil, ANK repeat and PH domain-containing protein 2 (Acap2), found in Rattus norvegicus (Rat).